Reading from the N-terminus, the 155-residue chain is uncharacterized protein (155 aa).

The transit peptide at 1–17 (MMRGASKRSISSAAVLL) directs the protein to the mitochondrion. The segment at 111–155 (WHRQQKRSQRRRSVAKYEQREEAARVEKEEREARDREMVRELFRR) is disordered. The segment covering 113-124 (RQQKRSQRRRSV) has biased composition (basic residues). The span at 125–155 (AKYEQREEAARVEKEEREARDREMVRELFRR) shows a compositional bias: basic and acidic residues.

Belongs to the prokaryotic/mitochondrial release factor family.

Its subcellular location is the mitochondrion. This is an uncharacterized protein from Saccharomyces cerevisiae (strain ATCC 204508 / S288c) (Baker's yeast).